A 347-amino-acid chain; its full sequence is D-alanine--D-alanine ligase (347 aa).

An ATP-grasp domain is found at 131 to 333; that stretch reads KRVLESAGIA…YPELIERLVD (203 aa). An ATP-binding site is contributed by 161–216; that stretch reads EEKLAYPVFTKPSNMGSSVGISKSENQEELRQALELAFRYDSRVLVEQGVNAREIE. Mg(2+) contacts are provided by D287, E300, and N302.

It belongs to the D-alanine--D-alanine ligase family. Requires Mg(2+) as cofactor. Mn(2+) serves as cofactor.

It localises to the cytoplasm. The catalysed reaction is 2 D-alanine + ATP = D-alanyl-D-alanine + ADP + phosphate + H(+). Its pathway is cell wall biogenesis; peptidoglycan biosynthesis. Cell wall formation. The sequence is that of D-alanine--D-alanine ligase from Streptococcus pneumoniae (strain CGSP14).